The sequence spans 85 residues: Toxin BmKAEP (85 aa).

Positions Met-1 to Ala-21 are cleaved as a signal peptide. Residues Asp-22–Gly-82 form the LCN-type CS-alpha/beta domain. Intrachain disulfides connect Cys-31/Cys-81, Cys-35/Cys-56, Cys-42/Cys-63, and Cys-46/Cys-65. Gly-82 is modified (glycine amide).

As to expression, expressed by the venom gland.

It localises to the secreted. Shows anti-epileptic activity. Shares high homology with depressant insect toxins, but shows very weak toxicity against mammals and insects and no obvious symptoms on insect larvae. May target voltage-gated sodium channel (Nav). The sequence is that of Toxin BmKAEP from Olivierus martensii (Manchurian scorpion).